A 318-amino-acid chain; its full sequence is Small ribosomal subunit protein mS26 (318 aa).

A disordered region spans residues 295–318 (IDSKLNPTSNGAGNNGNNNNTTNL). The segment covering 300–318 (NPTSNGAGNNGNNNNTTNL) has biased composition (low complexity).

The protein belongs to the mitochondrion-specific ribosomal protein mS26 family. Component of the mitochondrial small ribosomal subunit (mt-SSU). Mature yeast 74S mitochondrial ribosomes consist of a small (37S) and a large (54S) subunit. The 37S small subunit contains a 15S ribosomal RNA (15S mt-rRNA) and 34 different proteins. The 54S large subunit contains a 21S rRNA (21S mt-rRNA) and 46 different proteins.

It is found in the mitochondrion. In terms of biological role, component of the mitochondrial ribosome (mitoribosome), a dedicated translation machinery responsible for the synthesis of mitochondrial genome-encoded proteins, including at least some of the essential transmembrane subunits of the mitochondrial respiratory chain. The mitoribosomes are attached to the mitochondrial inner membrane and translation products are cotranslationally integrated into the membrane. The polypeptide is Small ribosomal subunit protein mS26 (PET123) (Saccharomyces cerevisiae (strain ATCC 204508 / S288c) (Baker's yeast)).